Reading from the N-terminus, the 65-residue chain is Large ribosomal subunit protein bL31 (65 aa).

Zn(2+) contacts are provided by cysteine 16, cysteine 18, cysteine 36, and cysteine 39.

Belongs to the bacterial ribosomal protein bL31 family. Type A subfamily. As to quaternary structure, part of the 50S ribosomal subunit. The cofactor is Zn(2+).

Functionally, binds the 23S rRNA. The polypeptide is Large ribosomal subunit protein bL31 (Geotalea uraniireducens (strain Rf4) (Geobacter uraniireducens)).